The sequence spans 418 residues: Serine protease inhibitor A3M (418 aa).

The first 20 residues, 1 to 20, serve as a signal peptide directing secretion; it reads MAFIAALGILMAGICPTVLC. Asn104, Asn184, and Asn269 each carry an N-linked (GlcNAc...) asparagine glycan. The segment at 367–392 is RCL; the sequence is GTEAAAATGFIFGFRSRRLQTMTVQF.

The protein belongs to the serpin family. Expressed in liver and testis.

The protein localises to the secreted. The polypeptide is Serine protease inhibitor A3M (Serpina3m) (Mus musculus (Mouse)).